Here is a 212-residue protein sequence, read N- to C-terminus: Ribonuclease HII (212 aa).

The 206-residue stretch at 1-206 (MICGVDEAGK…VKNLLHQKNQ (206 aa)) folds into the RNase H type-2 domain. Positions 6, 7, and 101 each coordinate a divalent metal cation.

Belongs to the RNase HII family. It depends on Mn(2+) as a cofactor. Mg(2+) serves as cofactor.

It localises to the cytoplasm. It carries out the reaction Endonucleolytic cleavage to 5'-phosphomonoester.. Its function is as follows. Endonuclease that specifically degrades the RNA of RNA-DNA hybrids. In Methanospirillum hungatei JF-1 (strain ATCC 27890 / DSM 864 / NBRC 100397 / JF-1), this protein is Ribonuclease HII.